The following is a 496-amino-acid chain: Chaperone SurA (496 aa).

The first 42 residues, 1-42 (MACKSTAVRSATRVAPTRRLGMVTGALVALMAGAALLPAAHA), serve as a signal peptide directing secretion. The disordered stretch occupies residues 53–80 (RGIFTTPDASPSQPLLRGTLPGPSTASG). PpiC domains lie at 235–337 (VQEY…KLVD) and 349–447 (VAQT…QVEG).

It is found in the periplasm. It catalyses the reaction [protein]-peptidylproline (omega=180) = [protein]-peptidylproline (omega=0). Functionally, chaperone involved in the correct folding and assembly of outer membrane proteins. Recognizes specific patterns of aromatic residues and the orientation of their side chains, which are found more frequently in integral outer membrane proteins. May act in both early periplasmic and late outer membrane-associated steps of protein maturation. In Ralstonia nicotianae (strain ATCC BAA-1114 / GMI1000) (Ralstonia solanacearum), this protein is Chaperone SurA.